Here is a 507-residue protein sequence, read N- to C-terminus: Alpha-amylase 2 (507 aa).

A signal peptide spans 1-20 (MKFATILSTTALALSSLVAS). Cys-62 and Cys-70 are joined by a disulfide. Trp-115 is a binding site for substrate. Asn-153 provides a ligand contact to Ca(2+). His-154 is a binding site for substrate. A disulfide bond links Cys-182 and Cys-196. 2 residues coordinate Ca(2+): Glu-194 and Asp-207. N-linked (GlcNAc...) asparagine glycosylation is present at Asn-229. Arg-236 contributes to the substrate binding site. Asp-238, His-242, and Glu-262 together coordinate Ca(2+). The active-site Nucleophile is the Asp-238. Position 241 to 242 (241 to 242 (KH)) interacts with substrate. The active-site Proton donor is the Glu-262. Gly-266 provides a ligand contact to substrate. A disulfide bridge links Cys-272 with Cys-315. 2 residues coordinate substrate: Asp-329 and Arg-376. Cys-470 and Cys-505 are oxidised to a cystine.

It belongs to the glycosyl hydrolase 13 family. Ca(2+) is required as a cofactor.

It carries out the reaction Endohydrolysis of (1-&gt;4)-alpha-D-glucosidic linkages in polysaccharides containing three or more (1-&gt;4)-alpha-linked D-glucose units.. The chain is Alpha-amylase 2 (SWA2) from Schwanniomyces occidentalis (Yeast).